Consider the following 4235-residue polypeptide: Tenellin synthetase (4235 aa).

One can recognise a Ketosynthase family 3 (KS3) domain in the interval 15–455; the sequence is SEPIAIVGSA…GTNAHAIIER (441 aa). Catalysis depends on for beta-ketoacyl synthase activity residues Cys189, His326, and His375. The segment at 590-924 is malonyl-CoA:ACP transacylase (MAT) domain; the sequence is IFTGQGAQWP…ANDAVAFSTA (335 aa). The N-terminal hotdog fold stretch occupies residues 993–1135; sequence HELLGRRMPD…GRIAVHLGAK (143 aa). A dehydratase (DH) domain region spans residues 993-1310; sequence HELLGRRMPD…GFEVRAVGEP (318 aa). In terms of domain architecture, PKS/mFAS DH spans 993–1313; it reads HELLGRRMPD…VRAVGEPDAS (321 aa). The Proton acceptor; for dehydratase activity role is filled by His1025. Residues 1158–1313 are C-terminal hotdog fold; it reads LQQLDCEKLY…VRAVGEPDAS (156 aa). The active-site Proton donor; for dehydratase activity is the Asp1217. The segment at 1459–1652 is methyltransferase (MT) domain; sequence RLYTEDKGMH…FSGVDHIVHD (194 aa). The interval 2208-2381 is ketoreductase (KR) domain; the sequence is TYLMVGAAGG…AASIIHVGHV (174 aa). In terms of domain architecture, Carrier 1 spans 2500–2580; it reads EAAAAALKGF…QLSALAAKLA (81 aa). Position 2540 is an O-(pantetheine 4'-phosphoryl)serine (Ser2540). Positions 2587 to 2709 are disordered; the sequence is RAQLEEASGN…EISSNGFFTQ (123 aa). A compositionally biased stretch (basic and acidic residues) spans 2605–2619; it reads NDKETGPSKKGKAQE. Composition is skewed to polar residues over residues 2645–2659 and 2666–2678; these read GGSS…SSVS and QEST…NNGE. Residues 2679-2695 are compositionally biased toward low complexity; that stretch reads STPSKSSNCNSDSGSDN. Residues 2720–3163 are condensation (C) domain; it reads REAPMSPAQS…TAQSVGDCVV (444 aa). The tract at residues 3197–3609 is adenylation (A) (KR) domain; it reads CQQHSTKSAI…DGTLLCFGRI (413 aa). The disordered stretch occupies residues 3724-3750; that stretch reads DEAAAATSPSNDNNNNNTPSGGGGEKM. Residues 3726–3742 are compositionally biased toward low complexity; sequence AAAATSPSNDNNNNNTP. One can recognise a Carrier 2 domain in the interval 3748-3833; it reads EKMTVRQGEL…GMARCVAEQR (86 aa). Ser3793 is modified (O-(pantetheine 4'-phosphoryl)serine). A disordered region spans residues 3860–3889; sequence EKLQHSSASSSSSSSSSSAGSSSTQRPRKT. The span at 3865–3882 shows a compositional bias: low complexity; that stretch reads SSASSSSSSSSSSAGSSS. Positions 3896 to 4141 are reductase (RED) domain; that stretch reads LTGATGFLGG…LDFGQVDKVV (246 aa).

The protein in the C-terminal section; belongs to the NRP synthetase family.

The protein operates within secondary metabolite biosynthesis. Its function is as follows. Hybrid PKS-NRPS synthetase; part of the gene cluster that mediates the biosynthesis of tenellin-type 2-pyridones, iron-chelating compounds involved in iron stress tolerance, competition with the natural competitor fungus Metarhizium robertsii and insect hosts infection. TenS catalyzes the assembly of the polyketide-amino acid backbone. Because tenS lacks a designated enoylreductase (ER) domain, the required activity is provided the enoyl reductase tenC. Upon formation of the polyketide backbone on the thiotemplate, the triketide is transferred to the NRPS module and linked to tyrosine to produce the pyrrolidine-2-dione intermediates, including pretellinin A, 11-hydropretellenin A, 12-hydropretellenin A, 13-hydropretellenin A, 14-hydropretellenin A, 12-oxopretellenin A and prototellinin D. The pathway begins with the assembly of the polyketide-amino acid backbone by the hybrid PKS-NRPS tenS with the help of the enoyl reductase tenC. These enzymes catalyze the synthesis of the pyrrolidine-2-dione intermediates pretellinin A, 11-hydropretellenin A, 12-hydropretellenin A, 13-hydropretellenin A, 14-hydropretellenin A, 12-oxopretellenin A and prototellinin D. The cytochrome P450 monooxygenase tenA then catalyzes an oxidative ring expansion of pretenellin A and 14-hydropretellenin A to form the 2-pyridone core, leading to pretenellin B and pyridovericin, respectively. The cytochrome P450 monooxygenase tenB is then required for the selective N-hydroxylation of the 2-pyridone nitrogen of yield tellinin and 15-hydroxytellenin (15-HT), respectively. The UDP-glucosyltransferase GT1 and the methyltransferase MT1, located outside the tenS gene cluster, contribute to the stepwise glycosylation and methylation of 15-HT to obtain the glycoside pyridovericin-N-O-(4-O-methyl-beta-D-glucopyranoside) (PMGP). Additional related compounds such as 1-O-methyl-15-HT, (8Z)-1-O-methyl-15-HT, and O-methyltenellin A are also produced but the enzymes involved in their biosynthesis have still to be determined. In Beauveria bassiana (strain ARSEF 2860) (White muscardine disease fungus), this protein is Tenellin synthetase.